Here is a 338-residue protein sequence, read N- to C-terminus: Mitochondrial transcription factor 1 (338 aa).

S-adenosyl-L-methionine-binding residues include Leu23, Asp76, Asp100, and Asn136.

This sequence belongs to the class I-like SAM-binding methyltransferase superfamily. rRNA adenine N(6)-methyltransferase family.

The protein resides in the mitochondrion. In terms of biological role, mitochondrial transcription factor that confers selective promoter recognition on the core subunit of the yeast mitochondrial RNA polymerase. Interacts with DNA in a non-specific manner. This is Mitochondrial transcription factor 1 (MTF1) from Lachancea kluyveri (Yeast).